The primary structure comprises 569 residues: Urease subunit alpha (569 aa).

Residues 131-569 (GGVDAHIHFI…VAMAQRYFLF (439 aa)) enclose the Urease domain. The Ni(2+) site is built by His-136, His-138, and Lys-219. Lys-219 is modified (N6-carboxylysine). Position 221 (His-221) interacts with substrate. Ni(2+) contacts are provided by His-248 and His-274. His-322 acts as the Proton donor in catalysis. Position 362 (Asp-362) interacts with Ni(2+).

The protein belongs to the metallo-dependent hydrolases superfamily. Urease alpha subunit family. In terms of assembly, heterotrimer of UreA (gamma), UreB (beta) and UreC (alpha) subunits. Three heterotrimers associate to form the active enzyme. Ni cation serves as cofactor. Post-translationally, carboxylation allows a single lysine to coordinate two nickel ions.

It localises to the cytoplasm. The enzyme catalyses urea + 2 H2O + H(+) = hydrogencarbonate + 2 NH4(+). The protein operates within nitrogen metabolism; urea degradation; CO(2) and NH(3) from urea (urease route): step 1/1. The sequence is that of Urease subunit alpha from Geobacillus kaustophilus (strain HTA426).